Here is a 420-residue protein sequence, read N- to C-terminus: NEDD8-specific protease 1 (420 aa).

The segment covering 257–281 has biased composition (low complexity); the sequence is KSSDSSETSHESSNSNLKKSSESGS. Positions 257–420 are disordered; the sequence is KSSDSSETSH…EELVSGDFPF (164 aa). Residues 286-296 show a composition bias toward basic and acidic residues; sequence NNHESDKDLHH. Over residues 297–310 the composition is skewed to basic residues; the sequence is EGHHHHHHHHHHHH. Basic and acidic residues predominate over residues 311-324; it reads SHDDDPSSPAEKKQ. A phosphoserine mark is found at Ser329, Ser340, and Ser351. Positions 355–377 are enriched in basic and acidic residues; that stretch reads NKEDHLPLLSDEKLDKSAIDKIE.

It belongs to the peptidase C48 family. Interacts with csn1. It is, however, not a component of the signalosome.

It is found in the cytoplasm. Its function is as follows. Protease that catalyzes two essential functions in the NEDD8 pathway: processing of full-length NEDD8 to its mature form and deconjugation of NEDD8 from targeted proteins such as the pcu1, pcu2 and pcu4 cullins and other proteins. This Schizosaccharomyces pombe (strain 972 / ATCC 24843) (Fission yeast) protein is NEDD8-specific protease 1 (nep1).